A 195-amino-acid polypeptide reads, in one-letter code: Large ribosomal subunit protein eL18 (195 aa).

Lys126 is covalently cross-linked (Glycyl lysine isopeptide (Lys-Gly) (interchain with G-Cter in SUMO2)). Ser137 bears the Phosphoserine mark. The interval 158–195 (HFGKAPGTPHSHTKPYVRSKGRKFERARGRRASRGYKN) is disordered. Thr165 carries the post-translational modification Phosphothreonine. 2 stretches are compositionally biased toward basic residues: residues 168 to 178 (SHTKPYVRSKG) and 185 to 195 (RGRRASRGYKN). Residue Lys171 forms a Glycyl lysine isopeptide (Lys-Gly) (interchain with G-Cter in SUMO2) linkage.

It belongs to the eukaryotic ribosomal protein eL18 family. Component of the large ribosomal subunit.

Its subcellular location is the cytoplasm. It is found in the cytosol. The protein resides in the rough endoplasmic reticulum. In terms of biological role, component of the large ribosomal subunit. The polypeptide is Large ribosomal subunit protein eL18 (RPL18) (Sus scrofa (Pig)).